Consider the following 217-residue polypeptide: ATP-dependent Clp protease proteolytic subunit 1 (217 aa).

Residues 1–24 (MTPLTTGWHPALSPRAEEGDTPPS) form a disordered region. Residue S108 is the Nucleophile of the active site. H133 is an active-site residue.

The protein belongs to the peptidase S14 family. Fourteen ClpP subunits assemble into 2 heptameric rings which stack back to back to give a disk-like structure with a central cavity, resembling the structure of eukaryotic proteasomes.

The protein localises to the cytoplasm. The catalysed reaction is Hydrolysis of proteins to small peptides in the presence of ATP and magnesium. alpha-casein is the usual test substrate. In the absence of ATP, only oligopeptides shorter than five residues are hydrolyzed (such as succinyl-Leu-Tyr-|-NHMec, and Leu-Tyr-Leu-|-Tyr-Trp, in which cleavage of the -Tyr-|-Leu- and -Tyr-|-Trp bonds also occurs).. Its function is as follows. Cleaves peptides in various proteins in a process that requires ATP hydrolysis. Has a chymotrypsin-like activity. Plays a major role in the degradation of misfolded proteins. The protein is ATP-dependent Clp protease proteolytic subunit 1 of Streptomyces avermitilis (strain ATCC 31267 / DSM 46492 / JCM 5070 / NBRC 14893 / NCIMB 12804 / NRRL 8165 / MA-4680).